A 346-amino-acid polypeptide reads, in one-letter code: Dihydroorotase (346 aa).

The Zn(2+) site is built by His-14 and His-16. Substrate contacts are provided by residues 16–18 and Asn-42; that span reads HLR. The Zn(2+) site is built by Lys-100, His-137, and His-175. Lys-100 carries the post-translational modification N6-carboxylysine. Residue His-137 coordinates substrate. Position 220 (Leu-220) interacts with substrate. Asp-248 provides a ligand contact to Zn(2+). Asp-248 is an active-site residue. 2 residues coordinate substrate: His-252 and Ala-264.

It belongs to the metallo-dependent hydrolases superfamily. DHOase family. Class II DHOase subfamily. In terms of assembly, homodimer. Requires Zn(2+) as cofactor.

It carries out the reaction (S)-dihydroorotate + H2O = N-carbamoyl-L-aspartate + H(+). The protein operates within pyrimidine metabolism; UMP biosynthesis via de novo pathway; (S)-dihydroorotate from bicarbonate: step 3/3. In terms of biological role, catalyzes the reversible cyclization of carbamoyl aspartate to dihydroorotate. This chain is Dihydroorotase, found in Cereibacter sphaeroides (strain ATCC 17025 / ATH 2.4.3) (Rhodobacter sphaeroides).